Consider the following 1139-residue polypeptide: Protein kinase C-like (1139 aa).

In terms of domain architecture, REM-1 1 spans 1–67 (MNEDEAIQNI…LRDIQLRKVG (67 aa)). Residues 72-132 (GMSLGADDAG…PGPGAASKAR (61 aa)) are disordered. An REM-1 2 domain is found at 142 to 219 (KYDTPYLGPR…LKRYEELHVD (78 aa)). The C2 domain maps to 225-343 (AQDDDSINTP…MRRKRIEAEM (119 aa)). The disordered stretch occupies residues 349 to 404 (VSADRMGSTGAPSQFPMSPTSGSFGGSPQAPGGGQGQAPGPFGDPAPQPQVVTGPI). The segment covering 358-368 (GAPSQFPMSPT) has biased composition (polar residues). 2 Phorbol-ester/DAG-type zinc fingers span residues 454-502 (GHKF…VTKC) and 522-572 (PHRF…PDFC). 3 disordered regions span residues 590–637 (KQRQ…TPSA), 649–668 (QTSP…LSAA), and 679–804 (QGRT…TDPG). A compositionally biased stretch (polar residues) spans 594-614 (QKTTSLSEKTLRSGATKSPTT). Over residues 615–629 (AGHGSSASFSSAGAG) the composition is skewed to low complexity. Pro residues-rich tracts occupy residues 723–734 (AQPPAQQRPPQP) and 743–760 (AQMP…PPQP). Residues 761-793 (GQQYQQQQPAAQKPQPQPPATAQGAAAGPPGSQ) show a composition bias toward low complexity. Residues 814 to 1073 (FNFLAVLGKG…AQEVMSQPFF (260 aa)) form the Protein kinase domain. Residues 820–828 (LGKGNFGKV) and K843 each bind ATP. D939 acts as the Proton acceptor in catalysis. Residues 1074 to 1139 (RNINWDDIYH…RGFSYTADLD (66 aa)) form the AGC-kinase C-terminal domain.

The protein belongs to the protein kinase superfamily. AGC Ser/Thr protein kinase family. PKC subfamily.

The enzyme catalyses L-seryl-[protein] + ATP = O-phospho-L-seryl-[protein] + ADP + H(+). The catalysed reaction is L-threonyl-[protein] + ATP = O-phospho-L-threonyl-[protein] + ADP + H(+). Its activity is regulated as follows. Stimulated about twofold by phospholipids or phorbol esters. In Hypocrea jecorina (Trichoderma reesei), this protein is Protein kinase C-like (pkc1).